The primary structure comprises 40 residues: Natriuretic peptide HsNP-b (40 aa).

Positions 1–8 (SGSKTAKI) are excised as a propeptide. The tract at residues 1 to 40 (SGSKTAKIGDGCFGVPIDHIGSTTDLGCGRPRPKPTPRGS) is disordered. Residues Cys12 and Cys28 are joined by a disulfide bond. A compositionally biased stretch (basic residues) spans 31–40 (PRPKPTPRGS).

This sequence belongs to the natriuretic peptide family. As to expression, expressed by the venom gland.

The protein localises to the secreted. Functionally, snake venom natriuretic peptide that targets both NPR1 and NPR2. Exhibits hypotensive and vasodepressor activities. The protein is Natriuretic peptide HsNP-b of Hoplocephalus stephensii (Stephens's banded snake).